The primary structure comprises 206 residues: Small ribosomal subunit protein uS7 (206 aa).

This sequence belongs to the universal ribosomal protein uS7 family. As to quaternary structure, component of the small ribosomal subunit.

Its subcellular location is the cytoplasm. Functionally, component of the small ribosomal subunit. The ribosome is a large ribonucleoprotein complex responsible for the synthesis of proteins in the cell. This chain is Small ribosomal subunit protein uS7, found in Entamoeba histolytica (strain ATCC 30459 / HM-1:IMSS / ABRM).